The following is a 183-amino-acid chain: D-glycero-alpha-D-manno-heptose-1,7-bisphosphate 7-phosphatase (183 aa).

Zn(2+)-binding residues include Cys-93, His-95, Cys-108, and Cys-110.

Belongs to the GmhB family.

The protein resides in the cytoplasm. The enzyme catalyses D-glycero-alpha-D-manno-heptose 1,7-bisphosphate + H2O = D-glycero-alpha-D-manno-heptose 1-phosphate + phosphate. The protein operates within nucleotide-sugar biosynthesis; GDP-D-glycero-alpha-D-manno-heptose biosynthesis; GDP-D-glycero-alpha-D-manno-heptose from D-glycero-alpha-D-manno-heptose 7-phosphate: step 2/3. Converts the D-glycero-alpha-D-manno-heptose 1,7-bisphosphate intermediate into D-glycero-alpha-D-manno-heptose 1-phosphate by removing the phosphate group at the C-7 position. This is D-glycero-alpha-D-manno-heptose-1,7-bisphosphate 7-phosphatase (gmhB2) from Photorhabdus laumondii subsp. laumondii (strain DSM 15139 / CIP 105565 / TT01) (Photorhabdus luminescens subsp. laumondii).